The chain runs to 315 residues: S-methyl-5'-thioadenosine phosphorylase (315 aa).

Residues serine 22, 65–66, and 98–99 each bind phosphate; these read RH and SA. Substrate is bound at residue methionine 205. Serine 206 contacts phosphate. 229 to 231 is a binding site for substrate; that stretch reads DYD.

It belongs to the PNP/MTAP phosphorylase family. MTAP subfamily. In terms of assembly, homotrimer.

Its subcellular location is the cytoplasm. The protein localises to the nucleus. It catalyses the reaction S-methyl-5'-thioadenosine + phosphate = 5-(methylsulfanyl)-alpha-D-ribose 1-phosphate + adenine. The protein operates within amino-acid biosynthesis; L-methionine biosynthesis via salvage pathway; S-methyl-5-thio-alpha-D-ribose 1-phosphate from S-methyl-5'-thioadenosine (phosphorylase route): step 1/1. In terms of biological role, catalyzes the reversible phosphorylation of S-methyl-5'-thioadenosine (MTA) to adenine and 5-methylthioribose-1-phosphate. Involved in the breakdown of MTA, a major by-product of polyamine biosynthesis. Responsible for the first step in the methionine salvage pathway after MTA has been generated from S-adenosylmethionine. Has broad substrate specificity with 6-aminopurine nucleosides as preferred substrates. The polypeptide is S-methyl-5'-thioadenosine phosphorylase (Mycosarcoma maydis (Corn smut fungus)).